The following is a 193-amino-acid chain: Rho-related GTP-binding protein RhoA-A (193 aa).

Residues 12–19, 30–37, 59–63, 117–120, and 160–162 each bind GTP; these read GDGACGKT, FPEVYVPT, DTAGQ, NKKD, and SAK. (Microbial infection) O-linked (GlcNAc) tyrosine; by Yersinia Afp18 glycosylation occurs at tyrosine 34. Residue cysteine 190 is modified to Cysteine methyl ester. A lipid anchor (S-geranylgeranyl cysteine) is attached at cysteine 190. The propeptide at 191-193 is removed in mature form; it reads ALL.

The protein belongs to the small GTPase superfamily. Rho family. In terms of processing, (Microbial infection) Glycosylated at Tyr-34 by Yersinia ruckeri toxin Afp18. Mono-O-GlcNAcylation by Afp18 inhibits RhoA activation by guanine nucleotide exchange factors and blocks RhoA signaling.

Its subcellular location is the cell membrane. Functionally, regulates a signal transduction pathway linking plasma membrane receptors to the assembly of focal adhesions and actin stress fibers. This chain is Rho-related GTP-binding protein RhoA-A, found in Danio rerio (Zebrafish).